A 327-amino-acid polypeptide reads, in one-letter code: Zinc transport protein ZntB (327 aa).

Topologically, residues 1 to 273 (MDAIKGSELQ…ARRTYTMSLM (273 aa)) are cytoplasmic. The helical transmembrane segment at 274 to 294 (AMVFLPSTFLTGLFGVNLGGI) threads the bilayer. The Periplasmic portion of the chain corresponds to 295 to 300 (PGNSWH). Residues 301–321 (LGFSLFCLMLVVVIGGVAWWL) traverse the membrane as a helical segment. Residues 322–327 (HRSKWL) are Cytoplasmic-facing.

Belongs to the CorA metal ion transporter (MIT) (TC 1.A.35) family.

Its subcellular location is the cell inner membrane. It catalyses the reaction Zn(2+)(out) + H(+)(out) = Zn(2+)(in) + H(+)(in). In terms of biological role, zinc transporter. Acts as a Zn(2+):proton symporter, which likely mediates zinc ion uptake. The polypeptide is Zinc transport protein ZntB (Klebsiella pneumoniae subsp. pneumoniae (strain ATCC 700721 / MGH 78578)).